We begin with the raw amino-acid sequence, 437 residues long: MALNKLKNIPSLTNSSHSSINGIASNAANSKPSGADTDDIDENDESGQSILLNIISQLKPGCDLSRITLPTFILEKKSMLERITNQLQFPDVLLEAHSNKDGLQRFVKVVAWYLAGWHIGPRAVKKPLNPILGEHFTAYWDLPNKQQAFYIAEQTSHHPPESAYFYMIPESNIRVDGVVVPKSKFLGNSSAAMMEGLTVLQFLDIKDANGKPEKYTLSQPNVYARGILFGKMRIELGDHMVIMGPKYQVDIEFKTKGFISGTYDAIEGTIKDYDGKEYYQISGKWNDIMYIKDLREKSSKKTVLFDTHQHFPLAPKVRPLEEQGEYESRRLWKKVTDALAVRDHEVATEEKFQIENRQRELAKKRAEDGVEFHSKLFRRAEPGEDLDYYIYKHIPEGTDKHEEQIRSILETAPILPGQTFTEKFSIPAYKKHGIQKN.

The segment covering 23 to 32 (IASNAANSKP) has biased composition (polar residues). Residues 23 to 42 (IASNAANSKPSGADTDDIDE) are disordered. Residues 54–393 (IISQLKPGCD…EDLDYYIYKH (340 aa)) form an OSBP-related domain (ORD) region. A 1,2-diacyl-sn-glycero-3-phospho-(1D-myo-inositol 4-phosphate) is bound by residues 64–69 (LSRITL), 126–129 (KPLN), and 157–158 (HH). Residues 64–69 (LSRITL) and asparagine 129 each bind a 1,2-diacyl-sn-glycero-3-phospho-L-serine. Serine 183 is an a 1,2-diacyl-sn-glycero-3-phospho-L-serine binding site. Lysine 276 is covalently cross-linked (Glycyl lysine isopeptide (Lys-Gly) (interchain with G-Cter in ubiquitin)). Lysine 351, glutamate 355, and arginine 359 together coordinate a 1,2-diacyl-sn-glycero-3-phospho-(1D-myo-inositol 4-phosphate).

It belongs to the OSBP family. Interacts with the AAA ATPase VPS4; regulates OSH7 membrane association. VPS4 is required for membrane dissociation of OSH7.

The protein localises to the cytoplasm. The protein resides in the cell membrane. It localises to the endoplasmic reticulum membrane. The catalysed reaction is a 1,2-diacyl-sn-glycero-3-phospho-L-serine(in) = a 1,2-diacyl-sn-glycero-3-phospho-L-serine(out). Its function is as follows. ipid transport protein (LTP) involved in non-vesicular transfer of lipids between membranes. Functions in phosphoinositide-coupled directional transport of various lipids by carrying the lipid molecule in a hydrophobic pocket and transferring it between membranes through the cytosol. Involved in maintenance of intracellular sterol distribution and homeostasis. Involved in lipid countertransport between the endoplasmic reticulum and the plasma membrane. Specifically exchanges phosphatidylserine with phosphatidylinositol 4-phosphate (PI4P), delivering phosphatidylserine to the PM in exchange for PI4P, which is delivered to the ER-localized PI4P phosphatase SAC1 for degradation. Thus, by maintaining a PI4P gradient at the ER/PM interface, SAC1 drives PS transport. Binds phosphatidylserine and PI4P in a mutually exclusive manner. The protein is Oxysterol-binding protein homolog 7 of Saccharomyces cerevisiae (strain ATCC 204508 / S288c) (Baker's yeast).